Reading from the N-terminus, the 566-residue chain is Bifunctional NADP phosphatase/NAD kinase (566 aa).

The NADP phosphatase stretch occupies residues 1–283 (MDMLEMALNI…KLVGIFGNRW (283 aa)). Residues E66, D85, V87, D88, and D229 each coordinate Mg(2+). An NAD kinase region spans residues 275-566 (LVGIFGNRWR…YNKLKKLSLM (292 aa)). D355 serves as the catalytic Proton acceptor. NAD(+)-binding positions include 355 to 356 (DG), R360, 430 to 431 (NE), K441, R458, D460, 471 to 476 (TAYSLS), and N528.

In the N-terminal section; belongs to the inositol monophosphatase superfamily. It in the C-terminal section; belongs to the NAD kinase family. In terms of assembly, homotetramer. Mg(2+) serves as cofactor.

Its subcellular location is the cytoplasm. The catalysed reaction is NAD(+) + ATP = ADP + NADP(+) + H(+). The enzyme catalyses NADP(+) + H2O = phosphate + NAD(+). In terms of biological role, involved in the regulation of the intracellular balance between NAD(H) and NADP(H), and is a key enzyme in the biosynthesis of NADP. Catalyzes the phosphorylation and dephosphorylation of NAD and NADP, respectively. Although it shows conflicting dual activities and is able to supply NADP, it seems that its physiological role is to prevent excess accumulation of NADP. In Methanococcus maripaludis (strain DSM 14266 / JCM 13030 / NBRC 101832 / S2 / LL), this protein is Bifunctional NADP phosphatase/NAD kinase.